A 158-amino-acid polypeptide reads, in one-letter code: Transcriptional repressor NrdR (158 aa).

The interval 1 to 22 (MRCPYCGSEDTQVKDSRPAEDN) is disordered. A zinc finger spans residues 3–34 (CPYCGSEDTQVKDSRPAEDNTSIRRRRICPDC). The span at 11–22 (TQVKDSRPAEDN) shows a compositional bias: basic and acidic residues. The 91-residue stretch at 49–139 (LMVIKKTGRK…VYRDFSHAED (91 aa)) folds into the ATP-cone domain.

This sequence belongs to the NrdR family. The cofactor is Zn(2+).

Functionally, negatively regulates transcription of bacterial ribonucleotide reductase nrd genes and operons by binding to NrdR-boxes. This Rhizobium rhizogenes (strain K84 / ATCC BAA-868) (Agrobacterium radiobacter) protein is Transcriptional repressor NrdR.